The chain runs to 381 residues: Curved DNA-binding protein (381 aa).

Position 8 is a phosphoserine (serine 8). Phosphothreonine is present on threonine 362. The short motif at 368–375 is the Nuclear localization signal element; that stretch reads KNKKKSKK.

The protein belongs to the peptidase M24 family.

It localises to the nucleus. A non-essential protein that preferentially binds curved DNA. Binds non-curved DNA with a much lower affinity. In Schizosaccharomyces pombe (strain 972 / ATCC 24843) (Fission yeast), this protein is Curved DNA-binding protein (cdb4).